The following is a 325-amino-acid chain: Pyruvate dehydrogenase E1 component subunit beta (325 aa).

Glutamate 60 provides a ligand contact to thiamine diphosphate.

As to quaternary structure, heterodimer of an alpha and a beta chain. Thiamine diphosphate is required as a cofactor.

The protein localises to the cytoplasm. It is found in the secreted. It catalyses the reaction N(6)-[(R)-lipoyl]-L-lysyl-[protein] + pyruvate + H(+) = N(6)-[(R)-S(8)-acetyldihydrolipoyl]-L-lysyl-[protein] + CO2. Activity of the E1 module is inhibited by the pyruvate dehydrogenase inhibitor PdhI. In terms of biological role, the pyruvate dehydrogenase complex catalyzes the overall conversion of pyruvate to acetyl-CoA and CO(2). It contains multiple copies of three enzymatic components: pyruvate dehydrogenase (E1), dihydrolipoamide acetyltransferase (E2) and lipoamide dehydrogenase (E3). Functionally, the B.subtilis PDH complex also possesses branched-chain 2-oxoacid dehydrogenase (BCDH) activity. In Bacillus subtilis (strain 168), this protein is Pyruvate dehydrogenase E1 component subunit beta.